The primary structure comprises 149 residues: Endonuclease I (149 aa).

Homodimer.

The enzyme catalyses Endonucleolytic cleavage to 5'-phosphooligonucleotide end-products.. Junction-resolving enzyme that selectively binds and cleaves four-way (Holliday) DNA junctions present after viral genomic replication. These intermediates are created during DNA repair, processing of stalled replication forks and homologous genetic recombination. Introduces two nicks on the two non-crossing strands, at 5' sides of the junction. Also participates together with gp6 in the degradation of host chromosome to provide nucleotides for phage DNA synthesis. The polypeptide is Endonuclease I (Escherichia coli (Bacteriophage T7)).